Consider the following 126-residue polypeptide: MFS14 protein (126 aa).

The or 24, or 26 signal peptide spans methionine 1–glycine 23.

In terms of tissue distribution, enhanced expression in male flowers. Accumulates in the tapetum.

The chain is MFS14 protein (MFS14) from Zea mays (Maize).